The following is a 105-amino-acid chain: Biogenesis of lysosome-related organelles complex 1 subunit SNN1 (105 aa).

The stretch at 70-105 forms a coiled coil; the sequence is WKDDNERLDSLRKRVDSLKSRFQSLKLRSDKLEQRE.

The protein belongs to the SNAPIN family. In terms of assembly, component of the biogenesis of lysosome-related organelles complex-1 (BLOC-1).

It localises to the endosome. Its function is as follows. Component of the biogenesis of lysosome-related organelles complex-1 (BLOC-1), a complex involved in endosomal cargo sorting. The polypeptide is Biogenesis of lysosome-related organelles complex 1 subunit SNN1 (SNN1) (Zygosaccharomyces rouxii (strain ATCC 2623 / CBS 732 / NBRC 1130 / NCYC 568 / NRRL Y-229)).